The sequence spans 86 residues: Putative defensin-like protein 211 (86 aa).

Positions 1-19 are cleaved as a signal peptide; the sequence is MNTIVLFLTLLILVSSCTS. 3 cysteine pairs are disulfide-bonded: Cys-55-Cys-72, Cys-58-Cys-77, and Cys-62-Cys-79.

It belongs to the DEFL family.

Its subcellular location is the secreted. The polypeptide is Putative defensin-like protein 211 (Arabidopsis thaliana (Mouse-ear cress)).